The primary structure comprises 279 residues: Proto-oncogene FRAT1 (279 aa).

Disordered regions lie at residues 1-24 and 56-76; these read MPCR…EEDS and AQHS…APGP. Over residues 7 to 24 the composition is skewed to acidic residues; that stretch reads EEEEAGEEAEGEEEEEDS. Ser-88 carries the post-translational modification Phosphoserine. Disordered stretches follow at residues 136-200 and 228-279; these read GPSA…DDPH and RAKL…VPGS. Positions 198-220 are involved in GSK-3 binding; the sequence is DPHRLLQQLVLSGNLIKEAVRRL. Phosphoserine is present on residues Ser-249 and Ser-252.

The protein belongs to the GSK-3-binding protein family. As to quaternary structure, binds DVL1. Binds GSK-3 and prevent GSK-3-dependent phosphorylation. Post-translationally, phosphorylated.

The protein localises to the cytoplasm. In terms of biological role, positively regulates the Wnt signaling pathway by stabilizing beta-catenin through the association with GSK-3. May play a role in tumor progression and collaborate with PIM1 and MYC in lymphomagenesis. This chain is Proto-oncogene FRAT1 (FRAT1), found in Homo sapiens (Human).